Here is a 259-residue protein sequence, read N- to C-terminus: Proteasome subunit alpha (259 aa).

The tract at residues 226 to 259 (LAEGSATSATSATPGEAEAPATAPEGDVDTGSNG) is disordered. A compositionally biased stretch (low complexity) spans 227-250 (AEGSATSATSATPGEAEAPATAPE).

Belongs to the peptidase T1A family. As to quaternary structure, the 20S proteasome core is composed of 14 alpha and 14 beta subunits that assemble into four stacked heptameric rings, resulting in a barrel-shaped structure. The two inner rings, each composed of seven catalytic beta subunits, are sandwiched by two outer rings, each composed of seven alpha subunits. The catalytic chamber with the active sites is on the inside of the barrel. Has a gated structure, the ends of the cylinder being occluded by the N-termini of the alpha-subunits. Is capped by the proteasome-associated ATPase, ARC.

The protein resides in the cytoplasm. It participates in protein degradation; proteasomal Pup-dependent pathway. Its activity is regulated as follows. The formation of the proteasomal ATPase ARC-20S proteasome complex, likely via the docking of the C-termini of ARC into the intersubunit pockets in the alpha-rings, may trigger opening of the gate for substrate entry. Interconversion between the open-gate and close-gate conformations leads to a dynamic regulation of the 20S proteasome proteolysis activity. Functionally, component of the proteasome core, a large protease complex with broad specificity involved in protein degradation. This Streptosporangium roseum (strain ATCC 12428 / DSM 43021 / JCM 3005 / KCTC 9067 / NCIMB 10171 / NRRL 2505 / NI 9100) protein is Proteasome subunit alpha.